We begin with the raw amino-acid sequence, 423 residues long: MVNQRVVHLCAKRSFSLTASMQKYFVDVYAKPDLVLTRGRGSRLFDDVNKREYIDFVAGIAVTSLGHSDPAIAEVIAAQSATLVHTSNLFHNSEALKFAEKLVESTKRFGGQQDAEKVYFCNSGTEANEAALKFSRRRALRTDPQKQGFIAFENSFHGRTMGSLSVTSKAKYRLPFGDMVPHVTFLNIHDPVEKLVSFIVENAPKTAAMILEPIQGEGGVHRVPEDKLVALGRLCKKHDIVLIYDEIQCGLGRTGKLWAHSNLPADAHPDIFTTAKALGNGFPMGATVVNSKVNEVLSVGDHGTTYGGNPLACAVGNHVLDRIAQQPFLDDVKAKANVFTAGLLALQKKYPFIREIRGDGLLIGVEFTVDVSDIISKSRERGLLITAAGPNTLRIIPALTIEEDTIRQGLEILESVVGEISSS.

Lysine 276 carries the post-translational modification N6-(pyridoxal phosphate)lysine.

The protein belongs to the class-III pyridoxal-phosphate-dependent aminotransferase family. Requires pyridoxal 5'-phosphate as cofactor.

The protein resides in the mitochondrion matrix. The enzyme catalyses N(2)-acetyl-L-ornithine + 2-oxoglutarate = N-acetyl-L-glutamate 5-semialdehyde + L-glutamate. Its pathway is amino-acid biosynthesis; L-arginine biosynthesis; N(2)-acetyl-L-ornithine from L-glutamate: step 4/4. This chain is Acetylornithine aminotransferase, mitochondrial (ARG8), found in Eremothecium gossypii (strain ATCC 10895 / CBS 109.51 / FGSC 9923 / NRRL Y-1056) (Yeast).